A 138-amino-acid polypeptide reads, in one-letter code: Large ribosomal subunit protein uL16 (138 aa).

The segment covering 1-16 (MLIPRRVKHRKQHHPS) has biased composition (basic residues). The segment at 1–25 (MLIPRRVKHRKQHHPSRSGAAKGGT) is disordered.

This sequence belongs to the universal ribosomal protein uL16 family. Part of the 50S ribosomal subunit.

Functionally, binds 23S rRNA and is also seen to make contacts with the A and possibly P site tRNAs. This Rhodococcus erythropolis (strain PR4 / NBRC 100887) protein is Large ribosomal subunit protein uL16.